The following is a 246-amino-acid chain: Octanoyltransferase (246 aa).

A BPL/LPL catalytic domain is found at 38 to 213 (AQQSDEFWVL…FLAKRLGLTP (176 aa)). Substrate is bound by residues 77–84 (RGGQVTYH), 144–146 (SLG), and 157–159 (GLA). Residue Cys-175 is the Acyl-thioester intermediate of the active site. The segment at 225–246 (RQENVTTGGDPGSALTQQPERL) is disordered.

It belongs to the LipB family.

It localises to the cytoplasm. It carries out the reaction octanoyl-[ACP] + L-lysyl-[protein] = N(6)-octanoyl-L-lysyl-[protein] + holo-[ACP] + H(+). It functions in the pathway protein modification; protein lipoylation via endogenous pathway; protein N(6)-(lipoyl)lysine from octanoyl-[acyl-carrier-protein]: step 1/2. Its function is as follows. Catalyzes the transfer of endogenously produced octanoic acid from octanoyl-acyl-carrier-protein onto the lipoyl domains of lipoate-dependent enzymes. Lipoyl-ACP can also act as a substrate although octanoyl-ACP is likely to be the physiological substrate. The protein is Octanoyltransferase of Alcanivorax borkumensis (strain ATCC 700651 / DSM 11573 / NCIMB 13689 / SK2).